A 459-amino-acid chain; its full sequence is ADP-specific phosphofructokinase (459 aa).

The ADPK domain occupies 1–457; that stretch reads MMEFLKDFQK…FASYLSLLKR (457 aa). Positions 268, 298, and 441 each coordinate Mg(2+). The active-site Proton acceptor is Asp-441.

Belongs to the carbohydrate kinase PfkC family. Mg(2+) is required as a cofactor.

It is found in the cytoplasm. It catalyses the reaction beta-D-fructose 6-phosphate + ADP = beta-D-fructose 1,6-bisphosphate + AMP + H(+). The protein operates within carbohydrate degradation; glycolysis. Catalyzes the phosphorylation of fructose 6-phosphate to fructose 1,6-bisphosphate using ADP as the phosphate donor. The polypeptide is ADP-specific phosphofructokinase (Thermococcus litoralis).